The chain runs to 257 residues: Glucosamine-6-phosphate deaminase (257 aa).

Catalysis depends on Asp-64, which acts as the Proton acceptor; for enolization step. Asn-133 functions as the For ring-opening step in the catalytic mechanism. His-135 functions as the Proton acceptor; for ring-opening step in the catalytic mechanism. Catalysis depends on Glu-140, which acts as the For ring-opening step.

Belongs to the glucosamine/galactosamine-6-phosphate isomerase family. NagB subfamily.

It carries out the reaction alpha-D-glucosamine 6-phosphate + H2O = beta-D-fructose 6-phosphate + NH4(+). The protein operates within amino-sugar metabolism; N-acetylneuraminate degradation; D-fructose 6-phosphate from N-acetylneuraminate: step 5/5. Its function is as follows. Catalyzes the reversible isomerization-deamination of glucosamine 6-phosphate (GlcN6P) to form fructose 6-phosphate (Fru6P) and ammonium ion. In Corynebacterium urealyticum (strain ATCC 43042 / DSM 7109), this protein is Glucosamine-6-phosphate deaminase.